A 691-amino-acid polypeptide reads, in one-letter code: MNKNPQRFTITAALPYTNGPIHIGHLAGVYVPADIYSRFLRMQGYDVAFVCGSDEHGVPITIKAKKEGVTPQDVVDKYNGIIKKSFEDFGITFDNYSRTSGKTHHDTASAFFKKMYEDGKFIEESTEQLYDEEAGQFLADRFVTGTCPKCGNEEAYGDQCESCGTSLNATDLINPKSAITGAVPTLKETRHWFLPLDQYEDFLKEWILKGHKSDWKSNVYGQVKSWIDDGLRARAVTRDLDWGIPVPVEGGDGKVLYVWFDAPIGYISSTKEWAEREGKDWEPYWKDENTKLVHFIGKDNIVFHCIIFPVMLKAHGDYILPENVPANEFLNLEGKKLSTSKNWAVWLHEYLEEFPDQQDVLRYVLTANAPETKDNDFTWKDFQARNNNELVAIFGNFINRVVVLTNKYYNGIVPEPGAYSEIDEKTIAELKAYPSVIASSIERYRFREAQGELMNLARLGNKYLADEEPWKLIKTDEERVKTIMYVALQIASALSIISEPFLPFTSAKLKKMLNHVDESSDNTPDWDIIGTKEALILGGHQIGKAELLFSKIEDEQMEKQLEKLEATKTANAMEDQKAEPQKEIATFEDFTKMDLRVGTIIEAQKMPKTKKLMVLKVDTGIDQRTVVSGIAEHFKAEDIIGKKVTVLANLAPRKLRGVDSEGMILMTENAEGKLVFVNPDEDGVKAGTTIN.

The short motif at 15 to 25 (PYTNGPIHIGH) is the 'HIGH' region element. 4 residues coordinate Zn(2+): Cys-147, Cys-150, Cys-160, and Cys-163. A 'KMSKS' region motif is present at residues 336 to 340 (KLSTS). ATP is bound at residue Thr-339. Positions 589–691 (DFTKMDLRVG…DGVKAGTTIN (103 aa)) constitute a tRNA-binding domain.

The protein belongs to the class-I aminoacyl-tRNA synthetase family. MetG type 1 subfamily. In terms of assembly, homodimer. Zn(2+) is required as a cofactor.

It localises to the cytoplasm. The enzyme catalyses tRNA(Met) + L-methionine + ATP = L-methionyl-tRNA(Met) + AMP + diphosphate. Functionally, is required not only for elongation of protein synthesis but also for the initiation of all mRNA translation through initiator tRNA(fMet) aminoacylation. The protein is Methionine--tRNA ligase of Christiangramia forsetii (strain DSM 17595 / CGMCC 1.15422 / KT0803) (Gramella forsetii).